A 198-amino-acid chain; its full sequence is Cyclin-dependent kinase inhibitor 1B (198 aa).

Over residues 1 to 11 (MSNVRVSNGSP) the composition is skewed to polar residues. The interval 1–22 (MSNVRVSNGSPSLERMDARQAE) is disordered. Serine 10 carries the phosphoserine; by UHMK1 modification. Positions 51 to 91 (DMEEASQRKWNFDFQNHKPLEGKYEWQEVEKGSLPEFYYRP) are interaction with CDK2. Tyrosine 74 is subject to Phosphotyrosine; by SRC. A disordered region spans residues 87–198 (FYYRPPRPPK…KKPGLRRRQT (112 aa)). Position 88 is a phosphotyrosine; by ABL, LYN and SRC (tyrosine 88). Tyrosine 89 carries the phosphotyrosine modification. Residues 104-113 (QESQDVSGNR) are compositionally biased toward polar residues. The span at 126–137 (EDTHLVDQKTDT) shows a compositional bias: basic and acidic residues. The Nuclear localization signal motif lies at 153 to 169 (KRPATDDSSPQNKRANR). Phosphothreonine; by CaMK1, PKB/AKT1 and PIM1 is present on threonine 157. Residue threonine 170 is modified to Phosphothreonine. The span at 175-186 (SDGSPNAGSVEQ) shows a compositional bias: polar residues. Threonine 187 bears the Phosphothreonine; by PKB/AKT1, CDK1 and CDK2 mark. Residue threonine 198 is modified to Phosphothreonine; by CaMK1, PKB/AKT1, RPS6KA1, RPS6KA3 and PIM1.

It belongs to the CDI family. As to quaternary structure, forms a ternary complex composed of CCNE1, CDK2 and CDKN1B. Interacts directly with CCNE1; the interaction is inhibited by CDK2-dependent phosphorylation on Thr-187. Interacts with COPS5, subunit of the COP9 signalosome complex; the interaction leads to CDKN1B degradation. Interacts with NUP50; the interaction leads to nuclear import and degradation of phosphorylated CDKN1B. Interacts with CCND1 and SNX6. Interacts (Thr-198-phosphorylated form) with 14-3-3 proteins, binds strongly YWHAQ, weakly YWHAE and YWHAH, but not YWHAB nor YWHAZ; the interaction with YWHAQ results in translocation to the cytoplasm. Interacts with AKT1 and LYN; the interactions lead to cytoplasmic mislocation, phosphorylation of CDKN1B and inhibition of cell cycle arrest. Forms a ternary complex with CCNA2 and CDK2; CDKN1B inhibits the kinase activity of CDK2 through conformational rearrangements. Interacts (unphosphorylated form) with CDK2. Forms a complex with CDK2 and SPDYA, but does not directly interact with SPDYA. Forms a ternary complex composed of cyclin D, CDK4 and CDKN1B. Interacts (phosphorylated on Tyr-88 and Tyr-89) with CDK4; the interaction is required for cyclin D and CDK4 complex assembly, induces nuclear translocation and activates the CDK4 kinase activity. Interacts with GRB2. Interacts with PIM1. Identified in a complex with SKP1, SKP2 and CKS1B. Interacts with UHMK1; the interaction leads to cytoplasmic mislocation, phosphorylation of CDKN1B and inhibition of cell cycle arrest. Also interacts with CDK1. Dephosphorylated on Thr-187 by PPM1H, leading to CDKN1B stability. Phosphorylated; phosphorylation occurs on serine, threonine and tyrosine residues. Phosphorylation on Ser-10 is the major site of phosphorylation in resting cells, takes place at the G(0)-G(1) phase and leads to protein stability. Phosphorylation on other sites is greatly enhanced by mitogens, growth factors, cMYC and in certain cancer cell lines. The phosphorylated form found in the cytoplasm is inactivate. Phosphorylation on Thr-198 is required for interaction with 14-3-3 proteins. Phosphorylation on Thr-187, by CDK1 and CDK2 leads to protein ubiquitination and proteasomal degradation. Tyrosine phosphorylation promotes this process. Phosphorylation by PKB/AKT1 can be suppressed by LY294002, an inhibitor of the catalytic subunit of PI3K. Phosphorylation on Tyr-88 and Tyr-89 has no effect on binding CDK2, but is required for binding CDK4. Dephosphorylated on tyrosine residues by G-CSF. Dephosphorylated on Thr-187 by PPM1H, leading to CDKN1B stability. Post-translationally, ubiquitinated; in the cytoplasm by the KPC complex (composed of RNF123/KPC1 and UBAC1/KPC2) and, in the nucleus, by SCF(SKP2). The latter requires prior phosphorylation on Thr-187. Ubiquitinated; by a TRIM21-containing SCF(SKP2)-like complex; leads to its degradation. In terms of processing, subject to degradation in the lysosome. Interaction with SNX6 promotes lysosomal degradation.

It localises to the nucleus. Its subcellular location is the cytoplasm. It is found in the endosome. Its function is as follows. Important regulator of cell cycle progression. Inhibits the kinase activity of CDK2 bound to cyclin A, but has little inhibitory activity on CDK2 bound to SPDYA. Involved in G1 arrest. Potent inhibitor of cyclin E- and cyclin A-CDK2 complexes. Forms a complex with cyclin type D-CDK4 complexes and is involved in the assembly, stability, and modulation of CCND1-CDK4 complex activation. Acts either as an inhibitor or an activator of cyclin type D-CDK4 complexes depending on its phosphorylation state and/or stoichometry. The sequence is that of Cyclin-dependent kinase inhibitor 1B (CDKN1B) from Felis catus (Cat).